A 272-amino-acid polypeptide reads, in one-letter code: Cholesterol 25-hydroxylase (272 aa).

A glycan (N-linked (GlcNAc...) asparagine) is linked at Asn-5. The next 3 helical transmembrane spans lie at 38–58, 84–104, and 121–141; these read FFPV…FVVL, LLPC…PVTL, and LLLL…EFFV. Positions 129-263 constitute a Fatty acid hydroxylase domain; sequence LFCLLLFDME…FTHWDKILGT (135 aa). The Histidine box-1 signature appears at 142–146; it reads WHLLH. A Histidine box-2 motif is present at residues 157 to 161; sequence HKVHH. N-linked (GlcNAc...) asparagine glycans are attached at residues Asn-163 and Asn-189. A Histidine box-3 motif is present at residues 238-244; it reads HHDLHHS.

This sequence belongs to the sterol desaturase family. The cofactor is Fe cation. In terms of processing, N-glycosylated.

The protein resides in the endoplasmic reticulum membrane. It catalyses the reaction cholesterol + AH2 + O2 = 25-hydroxycholesterol + A + H2O. The enzyme catalyses cholesterol + NADPH + O2 + H(+) = 25-hydroxycholesterol + NADP(+) + H2O. Catalyzes the formation of 25-hydroxycholesterol from cholesterol, leading to repress cholesterol biosynthetic enzymes. Plays a key role in cell positioning and movement in lymphoid tissues: 25-hydroxycholesterol is an intermediate in biosynthesis of 7-alpha,25-dihydroxycholesterol (7-alpha,25-OHC), an oxysterol that acts as a ligand for the G protein-coupled receptor GPR183/EBI2, a chemotactic receptor for a number of lymphoid cells. May play an important role in regulating lipid metabolism by synthesizing a corepressor that blocks sterol regulatory element binding protein (SREBP) processing. As an interferon-stimulated gene, has broad antiviral activities against a wide range of enveloped viruses, such as vesicular stomatitis virus (VSV) and SARS coronavirus-2 (SARS-CoV-2). Its product, 25-hydroxycholesterol, activates the ER-localized enzyme ACAT to induce internalization of accessible cholesterol on the plasma membrane and restricts SARS-CoV-2 S protein-mediated fusion which inhibits virus replication. In testis, production of 25-hydroxycholesterol by macrophages plays a role in Leydig cell differentiation. Required to restrain inflammation in macrophages: production of 25-hydroxycholesterol protects macrophages from cholesterol overload, thereby preventing mitochondrial DNA release and subsequent activation of the AIM2 inflammasome. The sequence is that of Cholesterol 25-hydroxylase from Homo sapiens (Human).